The sequence spans 149 residues: Large ribosomal subunit protein bL9 (149 aa).

This sequence belongs to the bacterial ribosomal protein bL9 family.

Binds to the 23S rRNA. The chain is Large ribosomal subunit protein bL9 from Fusobacterium nucleatum subsp. nucleatum (strain ATCC 25586 / DSM 15643 / BCRC 10681 / CIP 101130 / JCM 8532 / KCTC 2640 / LMG 13131 / VPI 4355).